The following is a 319-amino-acid chain: Protein-methionine methyltransferase laeA (319 aa).

Residues 269–293 (REPQSGTCSVQRENGANGDRSTLSA) form a disordered region. The span at 270-293 (EPQSGTCSVQRENGANGDRSTLSA) shows a compositional bias: polar residues.

The protein belongs to the methyltransferase superfamily. LaeA methyltransferase family. In terms of assembly, component of the heterotrimeric velvet complex composed of laeA, veA and velB; VeA acting as a bridging protein between laeA and velB.

Its subcellular location is the nucleus. The catalysed reaction is L-methionyl-[protein] + S-adenosyl-L-methionine = S-methyl-L-methionyl-[protein] + S-adenosyl-L-homocysteine. Its function is as follows. Methyltransferase; component of the velvet transcription factor complex that acts as a global regulator for secondary metabolite gene expression. Controls the expression of the chaetoglobosin A biosynthesis cluster via the cheR transcription factor and the subsequent production of chaetoglobosin A. Positively regulates the expression of smtA and negatively regulates the expression of velB. LaeA also regulates pigmentation and spores production. This Chaetomium globosum (strain ATCC 6205 / CBS 148.51 / DSM 1962 / NBRC 6347 / NRRL 1970) (Soil fungus) protein is Protein-methionine methyltransferase laeA.